We begin with the raw amino-acid sequence, 310 residues long: tRNA dimethylallyltransferase (310 aa).

19–26 serves as a coordination point for ATP; that stretch reads GPTGTGKS. Substrate is bound at residue 21-26; it reads TGTGKS.

It belongs to the IPP transferase family. In terms of assembly, monomer. Mg(2+) is required as a cofactor.

It catalyses the reaction adenosine(37) in tRNA + dimethylallyl diphosphate = N(6)-dimethylallyladenosine(37) in tRNA + diphosphate. Functionally, catalyzes the transfer of a dimethylallyl group onto the adenine at position 37 in tRNAs that read codons beginning with uridine, leading to the formation of N6-(dimethylallyl)adenosine (i(6)A). The polypeptide is tRNA dimethylallyltransferase (Saccharopolyspora erythraea (strain ATCC 11635 / DSM 40517 / JCM 4748 / NBRC 13426 / NCIMB 8594 / NRRL 2338)).